Reading from the N-terminus, the 547-residue chain is Mucin-13 (547 aa).

The segment covering 1 to 210 (MSQSSGGTST…TVTSSSSTGS (210 aa)) has biased composition (low complexity). The disordered stretch occupies residues 1–218 (MSQSSGGTST…GSNDPCNSNP (218 aa)). Residues 210 to 249 (SNDPCNSNPCKSPASCVKLYDSYFCLCLEGYYYNNSSSCV) enclose the EGF-like 1 domain. Cystine bridges form between Cys-214–Cys-225, Cys-219–Cys-234, and Cys-236–Cys-248. Asn-243, Asn-244, and Asn-263 each carry an N-linked (GlcNAc...) asparagine glycan. The SEA domain occupies 250–366 (KGTTFPGEIG…ERYFQQDRCD (117 aa)). 2 consecutive EGF-like domains span residues 361 to 401 (QQDR…PFCV) and 401 to 441 (VAPT…GKCE). Disulfide bonds link Cys-365/Cys-378, Cys-370/Cys-384, Cys-386/Cys-400, Cys-409/Cys-427, and Cys-429/Cys-440. The helical transmembrane segment at 459–479 (ILTIVGTIAGAFILILLIVFI) threads the bilayer. Residues 480–547 (VSMRSKNKKK…NHRSMPRPDY (68 aa)) are Cytoplasmic-facing. Residues 525–547 (KTGVPSQTSNPYANHRSMPRPDY) form a disordered region.

In terms of assembly, homodimer of beta subunits. Post-translationally, cleaved into two subunits, alpha and beta, probably between the first EGF domain and the SEA domain. Beta subunit contains the cytoplasmic tail and alpha subunit the extracellular tail. The homooligomerization into dimers is dependent on intrachain disulfide bonds. Highly glycosylated.

The protein resides in the cell membrane. The protein localises to the secreted. Functionally, epithelial and hemopoietic transmembrane mucin that may play a role in cell signaling. This Rattus norvegicus (Rat) protein is Mucin-13 (Muc13).